The primary structure comprises 186 residues: Ribosome-recycling factor (186 aa).

Belongs to the RRF family.

The protein resides in the cytoplasm. Responsible for the release of ribosomes from messenger RNA at the termination of protein biosynthesis. May increase the efficiency of translation by recycling ribosomes from one round of translation to another. The sequence is that of Ribosome-recycling factor from Ralstonia pickettii (strain 12J).